The primary structure comprises 511 residues: D-alanine--D-alanyl carrier protein ligase (511 aa).

152–153 (TS) contributes to the ATP binding site. Position 199 (D199) interacts with D-alanine. 294-299 (NAYGPT) contributes to the ATP binding site. V303 serves as a coordination point for D-alanine. Residues D385, 397 to 400 (YGGR), and K499 contribute to the ATP site. K499 contributes to the D-alanine binding site.

It belongs to the ATP-dependent AMP-binding enzyme family. DltA subfamily.

It localises to the cytoplasm. The enzyme catalyses holo-[D-alanyl-carrier protein] + D-alanine + ATP = D-alanyl-[D-alanyl-carrier protein] + AMP + diphosphate. It participates in cell wall biogenesis; lipoteichoic acid biosynthesis. Its function is as follows. Catalyzes the first step in the D-alanylation of lipoteichoic acid (LTA), the activation of D-alanine and its transfer onto the D-alanyl carrier protein (Dcp) DltC. In an ATP-dependent two-step reaction, forms a high energy D-alanyl-AMP intermediate, followed by transfer of the D-alanyl residue as a thiol ester to the phosphopantheinyl prosthetic group of the Dcp. D-alanylation of LTA plays an important role in modulating the properties of the cell wall in Gram-positive bacteria, influencing the net charge of the cell wall. The polypeptide is D-alanine--D-alanyl carrier protein ligase (Streptococcus agalactiae serotype III (strain NEM316)).